The chain runs to 464 residues: Soluble pyridine nucleotide transhydrogenase (464 aa).

35–44 contributes to the FAD binding site; that stretch reads DSRRQVGGNC.

Belongs to the class-I pyridine nucleotide-disulfide oxidoreductase family. It depends on FAD as a cofactor.

It is found in the cytoplasm. The catalysed reaction is NAD(+) + NADPH = NADH + NADP(+). Conversion of NADPH, generated by peripheral catabolic pathways, to NADH, which can enter the respiratory chain for energy generation. In Pseudomonas syringae pv. syringae (strain B728a), this protein is Soluble pyridine nucleotide transhydrogenase.